The chain runs to 201 residues: Putative 3-methyladenine DNA glycosylase (201 aa).

It belongs to the DNA glycosylase MPG family.

This chain is Putative 3-methyladenine DNA glycosylase, found in Nitrosococcus oceani (strain ATCC 19707 / BCRC 17464 / JCM 30415 / NCIMB 11848 / C-107).